Reading from the N-terminus, the 127-residue chain is UPF0102 protein Paes_0016 (127 aa).

This sequence belongs to the UPF0102 family.

The chain is UPF0102 protein Paes_0016 from Prosthecochloris aestuarii (strain DSM 271 / SK 413).